The sequence spans 303 residues: Acetylglutamate kinase (303 aa).

Substrate is bound by residues 69–70, R91, and N201; that span reads GG.

The protein belongs to the acetylglutamate kinase family. ArgB subfamily.

The protein resides in the cytoplasm. The catalysed reaction is N-acetyl-L-glutamate + ATP = N-acetyl-L-glutamyl 5-phosphate + ADP. It functions in the pathway amino-acid biosynthesis; L-arginine biosynthesis; N(2)-acetyl-L-ornithine from L-glutamate: step 2/4. Functionally, catalyzes the ATP-dependent phosphorylation of N-acetyl-L-glutamate. This chain is Acetylglutamate kinase, found in Novosphingobium aromaticivorans (strain ATCC 700278 / DSM 12444 / CCUG 56034 / CIP 105152 / NBRC 16084 / F199).